The primary structure comprises 436 residues: Trigger factor (436 aa).

The PPIase FKBP-type domain maps to 161–246 (GDQLNIDFVG…VNSVSAPQLP (86 aa)).

It belongs to the FKBP-type PPIase family. Tig subfamily.

It localises to the cytoplasm. The catalysed reaction is [protein]-peptidylproline (omega=180) = [protein]-peptidylproline (omega=0). Its function is as follows. Involved in protein export. Acts as a chaperone by maintaining the newly synthesized protein in an open conformation. Functions as a peptidyl-prolyl cis-trans isomerase. The polypeptide is Trigger factor (Ectopseudomonas mendocina (strain ymp) (Pseudomonas mendocina)).